The sequence spans 996 residues: MENAHTKSPAECLSYFGVNEHTGLSPDQFKKNLDKFGYNELPAEEGKSIWDLIVEQFEDLLVRILLLAACISFVLAWFEEGEETITAFVEPFVILLILIANAIVGVWQERNAEDAIEALKEYEPEMGKVYRSDRKSVQRIKAREIVPGDIVEVSVGDKVPADIRIVSIKSTTLRVDQSILTGESVSVIKHTESVPDPRAVNQDKKNMLFSGTNIAAGKAIGVAIATGVSTEIGKIRDQMAATEQEKTPLQAKLDEFGEQLSKVISLICVAVWAINIGHFNDPVHGGSWIRGAVYYFKIAVALAVAAIPEGLPAVITTCLALGTRRMAKKNAIVRSLPSVETLGCTSVICSDKTGTLTTNQMCVTKMFIVKSVDGDHVDLNAFDISGSKYTPEGEVSHGGSKTNCSAYDGLVELATICALCNDSSLDYNESKKIYEKVGEATETALCCLVEKMNVFNSNVKNLSRIERANACCTVIKQLMKKNFTLEFSRDRKSMSVYCTPAKGDGGAKMFVKGAPEGVIDRCAYVRVGTTRVPLTSAIKEKIMAVIRDWGTGRDTLRCLALATRDTPLKVEEMNLEDSTKFADYETDMTFVGCVGMLDPPRKEVTGSIELCRDAGIRVIMITGDNKGTAIAICRRIGIFKEDEDVSNKAYTGREFDDLPSQDQAEAVRRACCFARVEPSHKSKIVEFLQGNDDITAMTGDGVNDAPALKKAEIGIAMGSGTAVAKSASEMVLADDNFSSIVAAVEEGRAIYNNMKQFIRYLISSNVGEVVCIFLTAALGLPEALIPVQLLWVNLVTDGLPATALGFNPPDLDIMGKPPRSPKEPLISGWLFFRYMAIGGYVGAATVGGAAWWFLYDSTGPAVTYYQLSHFMQCHNHNEDFTGVDCDIFEASPPMTMALSVLVTIEMCNALNSLSENQSLIRMPPWSNLWLMAAMTLSMSLHFMIIYVDPLPMIFKLTHLTFDQWLMVFKLSFPVILIDEVLKFFARNYIETGKEVK.

The Cytoplasmic segment spans residues 1 to 48 (MENAHTKSPAECLSYFGVNEHTGLSPDQFKKNLDKFGYNELPAEEGKS). Residues 49–69 (IWDLIVEQFEDLLVRILLLAA) form a helical membrane-spanning segment. The Lumenal segment spans residues 70 to 89 (CISFVLAWFEEGEETITAFV). The helical transmembrane segment at 90 to 110 (EPFVILLILIANAIVGVWQER) threads the bilayer. The Cytoplasmic portion of the chain corresponds to 111 to 253 (NAEDAIEALK…QEKTPLQAKL (143 aa)). A helical transmembrane segment spans residues 254 to 273 (DEFGEQLSKVISLICVAVWA). Topologically, residues 274-295 (INIGHFNDPVHGGSWIRGAVYY) are lumenal. A helical transmembrane segment spans residues 296–313 (FKIAVALAVAAIPEGLPA). Positions 304, 305, 307, and 309 each coordinate Ca(2+). Residues 314–754 (VITTCLALGT…EEGRAIYNNM (441 aa)) are Cytoplasmic-facing. The active-site 4-aspartylphosphate intermediate is the D351. Residues D351 and T353 each contribute to the Mg(2+) site. Positions 353, 442, 489, 512, 557, 622, 623, 624, 675, and 681 each coordinate ATP. A Mg(2+)-binding site is contributed by D700. N703 is an ATP binding site. The chain crosses the membrane as a helical span at residues 755–774 (KQFIRYLISSNVGEVVCIFL). Positions 765 and 768 each coordinate Ca(2+). At 775-784 (TAALGLPEAL) the chain is on the lumenal side. A helical membrane pass occupies residues 785-805 (IPVQLLWVNLVTDGLPATALG). The interval 785 to 805 (IPVQLLWVNLVTDGLPATALG) is interaction with PLN. Ca(2+) is bound by residues N793, T796, and D797. Over 806–825 (FNPPDLDIMGKPPRSPKEPL) the chain is Cytoplasmic. A helical membrane pass occupies residues 826-848 (ISGWLFFRYMAIGGYVGAATVGG). Topologically, residues 849 to 894 (AAWWFLYDSTGPAVTYYQLSHFMQCHNHNEDFTGVDCDIFEASPPM) are lumenal. C873 and C885 form a disulfide bridge. The helical transmembrane segment at 895–914 (TMALSVLVTIEMCNALNSLS) threads the bilayer. E905 is a Ca(2+) binding site. Residues 915-927 (ENQSLIRMPPWSN) lie on the Cytoplasmic side of the membrane. The chain crosses the membrane as a helical span at residues 928-946 (LWLMAAMTLSMSLHFMIIY). The segment at 929–940 (WLMAAMTLSMSL) is interaction with PLN. At 947–961 (VDPLPMIFKLTHLTF) the chain is on the lumenal side. A helical membrane pass occupies residues 962–982 (DQWLMVFKLSFPVILIDEVLK). The Cytoplasmic portion of the chain corresponds to 983–996 (FFARNYIETGKEVK).

The protein belongs to the cation transport ATPase (P-type) (TC 3.A.3) family. Type IIA subfamily. As to quaternary structure, interacts with sarcolipin (SLN). Interacts with phospholamban (PLN). Interacts with myoregulin (MRLN). Interacts with DWORF. Requires Mg(2+) as cofactor.

The protein resides in the endoplasmic reticulum membrane. Its subcellular location is the sarcoplasmic reticulum membrane. The catalysed reaction is Ca(2+)(in) + ATP + H2O = Ca(2+)(out) + ADP + phosphate + H(+). Inhibited by sarcolipin (SLN) and myoregulin (MRLN). Also shown to be inhibited by phospholamban (PLN) in vitro. Enhanced by DWORF; DWORF increases activity by displacing sarcolipin (SLN), phospholamban (PLN) and myoregulin (MRLN). Key regulator of striated muscle performance by acting as the major Ca(2+) ATPase responsible for the reuptake of cytosolic Ca(2+) into the sarcoplasmic reticulum. Catalyzes the hydrolysis of ATP coupled with the translocation of calcium from the cytosol to the sarcoplasmic reticulum lumen. Contributes to calcium sequestration involved in muscular excitation/contraction. In Makaira nigricans (Atlantic blue marlin), this protein is Sarcoplasmic/endoplasmic reticulum calcium ATPase 1 (atp2a1).